The chain runs to 621 residues: ATP-dependent DNA helicase Q1 (621 aa).

One can recognise a Helicase ATP-binding domain in the interval 100–275; it reads VNATMARKDI…QKILCVEKCL (176 aa). 113–120 serves as a coordination point for ATP; it reads MPTGGGKS. Positions 219–222 match the DEVH box motif; the sequence is DEVH. The region spanning 296-451 is the Helicase C-terminal domain; the sequence is SAEDFIENIA…EMVSYCQNIS (156 aa). 4 residues coordinate Zn(2+): C453, C471, C475, and C478. 2 positions are modified to N6-acetyllysine: K514 and K522. A phosphoserine mark is found at S597 and S602.

The protein belongs to the helicase family. RecQ subfamily. In terms of assembly, may form homodimers or higher order oligomers. Interacts with EXO1. Interacts with MLH1. Interacts with PARP1. Mg(2+) is required as a cofactor. Mn(2+) serves as cofactor. Requires Zn(2+) as cofactor.

It is found in the nucleus. It catalyses the reaction Couples ATP hydrolysis with the unwinding of duplex DNA by translocating in the 3'-5' direction.. It carries out the reaction ATP + H2O = ADP + phosphate + H(+). The catalysed reaction is dATP + H2O = dADP + phosphate + H(+). DNA helicase that plays a role in DNA damage repair and genome stability. Exhibits a magnesium- and ATP-dependent DNA-helicase activity that unwinds single- and double-stranded DNA in a 3'-5' direction. Plays a role in restoring regressed replication forks. Required to restart stalled replication forks induced by abortive topoisomerase 1 and 2 lesions. May play a role in the repair of DNA that is damaged by ultraviolet light or other mutagens. This is ATP-dependent DNA helicase Q1 (Recql) from Rattus norvegicus (Rat).